Here is a 25-residue protein sequence, read N- to C-terminus: Xenoposin precursor fragment BM2 (25 aa).

In terms of tissue distribution, expressed by the skin glands.

The protein resides in the secreted. Antimicrobial peptide. The sequence is that of Xenoposin precursor fragment BM2 from Xenopus boumbaensis (Mawa clawed frog).